The chain runs to 266 residues: Ribosomal RNA small subunit methyltransferase A (266 aa).

Residues histidine 13, leucine 15, glycine 40, glutamate 61, aspartate 85, and asparagine 104 each contribute to the S-adenosyl-L-methionine site.

It belongs to the class I-like SAM-binding methyltransferase superfamily. rRNA adenine N(6)-methyltransferase family. RsmA subfamily.

Its subcellular location is the cytoplasm. It catalyses the reaction adenosine(1518)/adenosine(1519) in 16S rRNA + 4 S-adenosyl-L-methionine = N(6)-dimethyladenosine(1518)/N(6)-dimethyladenosine(1519) in 16S rRNA + 4 S-adenosyl-L-homocysteine + 4 H(+). Specifically dimethylates two adjacent adenosines (A1518 and A1519) in the loop of a conserved hairpin near the 3'-end of 16S rRNA in the 30S particle. May play a critical role in biogenesis of 30S subunits. This chain is Ribosomal RNA small subunit methyltransferase A, found in Parabacteroides distasonis (strain ATCC 8503 / DSM 20701 / CIP 104284 / JCM 5825 / NCTC 11152).